Here is a 168-residue protein sequence, read N- to C-terminus: MNWFFTLASIVIVLDQLTKKIAVMILKEKESVTLIPDWLKFTYAENNGIAFGMEFAPKEVMILLVGTISLLIALYVFRSKNRTTRFILPFALVFGGGVGNMIDRITGGKVIDFIHIDLYNGMIMGTWVSLWPIFNIADSAITIGACLLILFHSTIFPDQSVQKNTDVH.

A run of 2 helical transmembrane segments spans residues 57–77 (PKEV…LYVF) and 86–106 (FILP…DRIT). Active-site residues include Asp-112 and Asp-138. The helical transmembrane segment at 131–151 (WPIFNIADSAITIGACLLILF) threads the bilayer.

The protein belongs to the peptidase A8 family.

The protein localises to the cell inner membrane. It carries out the reaction Release of signal peptides from bacterial membrane prolipoproteins. Hydrolyzes -Xaa-Yaa-Zaa-|-(S,diacylglyceryl)Cys-, in which Xaa is hydrophobic (preferably Leu), and Yaa (Ala or Ser) and Zaa (Gly or Ala) have small, neutral side chains.. It functions in the pathway protein modification; lipoprotein biosynthesis (signal peptide cleavage). In terms of biological role, this protein specifically catalyzes the removal of signal peptides from prolipoproteins. The sequence is that of Lipoprotein signal peptidase from Chlorobium phaeobacteroides (strain DSM 266 / SMG 266 / 2430).